The primary structure comprises 39 residues: Cytochrome b559 subunit beta (39 aa).

A helical transmembrane segment spans residues 14 to 30; the sequence is WLAVHGLAVPTVSFLGS. His18 contributes to the heme binding site.

Belongs to the PsbE/PsbF family. As to quaternary structure, heterodimer of an alpha subunit and a beta subunit. PSII is composed of 1 copy each of membrane proteins PsbA, PsbB, PsbC, PsbD, PsbE, PsbF, PsbH, PsbI, PsbJ, PsbK, PsbL, PsbM, PsbT, PsbX, PsbY, PsbZ, Psb30/Ycf12, at least 3 peripheral proteins of the oxygen-evolving complex and a large number of cofactors. It forms dimeric complexes. Heme b serves as cofactor.

It localises to the plastid. Its subcellular location is the chloroplast thylakoid membrane. This b-type cytochrome is tightly associated with the reaction center of photosystem II (PSII). PSII is a light-driven water:plastoquinone oxidoreductase that uses light energy to abstract electrons from H(2)O, generating O(2) and a proton gradient subsequently used for ATP formation. It consists of a core antenna complex that captures photons, and an electron transfer chain that converts photonic excitation into a charge separation. This Lotus japonicus (Lotus corniculatus var. japonicus) protein is Cytochrome b559 subunit beta.